A 763-amino-acid chain; its full sequence is High glucose sensor RGT2 (763 aa).

Residues 1-28 (MNDSQNCLRQREENSHLNPGNDFGHHQG) form a disordered region. Topologically, residues 1-99 (MNDSQNCLRQ…PLPLRSNVMS (99 aa)) are cytoplasmic. Residues 100–120 (VLVGIFVAVGGFLFGYDTGLI) form a helical membrane-spanning segment. The Extracellular segment spans residues 121-144 (NSITDMPYVKTYIAPNHSYFTTSQ). A glycan (N-linked (GlcNAc...) asparagine) is linked at asparagine 136. The helical transmembrane segment at 145–165 (IAILVSFLSLGTFFGALIAPY) threads the bilayer. Topologically, residues 166 to 175 (ISDSYGRKPT) are cytoplasmic. A helical transmembrane segment spans residues 176-196 (IMFSTAVIFSIGNSLQVASGG). A topological domain (extracellular) is located at residue leucine 197. Residues 198-218 (VLLIVGRVISGIGIGIISAVV) form a helical membrane-spanning segment. At 219-231 (PLYQAEAAQKNLR) the chain is on the cytoplasmic side. Residues 232–252 (GAIISSYQWAITIGLLVSSAV) traverse the membrane as a helical segment. Residues 253 to 266 (SQGTHSKNGPSSYR) are Extracellular-facing. Residues 267-287 (IPIGLQYVWSSILAVGMIFLP) traverse the membrane as a helical segment. Over 288–357 (ESPRYYVLKD…SENRPKQILR (70 aa)) the chain is Cytoplasmic. Residues 358–378 (IFTGIAIQAFQQASGINFIFY) form a helical membrane-spanning segment. Over 379–393 (YGVNFFNNTGVDNSY) the chain is Extracellular. N-linked (GlcNAc...) asparagine glycosylation is present at asparagine 385. The helical transmembrane segment at 394–414 (LVSFISYAVNVAFSIPGMYLV) threads the bilayer. Topologically, residues 415–421 (DRIGRRP) are cytoplasmic. A helical transmembrane segment spans residues 422–442 (VLLAGGVIMAIANLVIAIVGV). The Extracellular portion of the chain corresponds to 443–452 (SEGKTVVASK). The helical transmembrane segment at 453-473 (IMIAFICLFIAAFSATWGGVV) threads the bilayer. The Cytoplasmic portion of the chain corresponds to 474–491 (WVVSAELYPLGVRSKCTA). The helical transmembrane segment at 492–512 (ICAAANWLVNFTCALITPYIV) threads the bilayer. Residues 513 to 524 (DVGSHTSSMGPK) lie on the Extracellular side of the membrane. A helical membrane pass occupies residues 525-545 (IFFIWGGLNVVAVIVVYFAVY). Residues 546-763 (ETRGLTLEEI…SKHSQYTSPQ (218 aa)) lie on the Cytoplasmic side of the membrane. A compositionally biased stretch (low complexity) spans 725–737 (SSTTSNDTSFSPS). The segment at 725–763 (SSTTSNDTSFSPSHNSNARTSSNWTSDLASKHSQYTSPQ) is disordered. The span at 738-763 (HNSNARTSSNWTSDLASKHSQYTSPQ) shows a compositional bias: polar residues.

Belongs to the major facilitator superfamily. Sugar transporter (TC 2.A.1.1) family. In terms of assembly, interacts with YCK1. Interacts with MTH1 and STD1. Phosphorylated in the C-terminal tail on Yck consensus sites in a yeast casein kinases YCK1 and YCK2 (Yck)-dependent manner. This phosphorylation is required for interaction with HXT corepressors MTH1 and STD1 and ultimately HXT expression.

Its subcellular location is the cell membrane. Low-affinity high glucose sensor that is part of the sensor/receptor-repressor (SSR) glucose-signaling pathway, which detects extracellular glucose and induces expression of glucose transporters that bring glucose into the cell. The transporter-like sensor generates an intracellular signal in the presence of high levels of glucose to promote high glucose-induced expression of HXT1. Binding of glucose to the RGT2 transmembrane domain activates a downstream signaling cascade, leading to phosphorylation of the RGT1 corepressors MTH1 and STD1, targeting them for SCF(Grr1)-dependent ubiquitination and degradation. Depletion of the corepressors robs RGT1 of its ability to repress expression of HXT genes, leading to accumulation of glucose transporters in the plasma membrane. Even though RGT2 is similar to glucose transporters, it appears to be unable to transport glucose. The polypeptide is High glucose sensor RGT2 (Saccharomyces cerevisiae (strain ATCC 204508 / S288c) (Baker's yeast)).